We begin with the raw amino-acid sequence, 78 residues long: MPTKAGTKSTANKKTTKGSSKSGSSRGHTGKTHASSSMHSGMLYKDMVNIARSRGIPIYQNGSRLTKSELEKKIKRSK.

Over residues 1–27 the composition is skewed to low complexity; that stretch reads MPTKAGTKSTANKKTTKGSSKSGSSRG. The disordered stretch occupies residues 1–41; sequence MPTKAGTKSTANKKTTKGSSKSGSSRGHTGKTHASSSMHSG.

It belongs to the asfivirus P10 family.

The protein localises to the virion. Functionally, may play a role in genome packaging through direct interaction with viral DNA. Binds to ssDNA and dsDNA with the same apparent affinity in vitro. This African swine fever virus (strain Badajoz 1971 Vero-adapted) (Ba71V) protein is Structural DNA-binding protein p10.